Here is a 59-residue protein sequence, read N- to C-terminus: Large ribosomal subunit protein bL32 (59 aa).

This sequence belongs to the bacterial ribosomal protein bL32 family.

In Thermodesulfovibrio yellowstonii (strain ATCC 51303 / DSM 11347 / YP87), this protein is Large ribosomal subunit protein bL32.